The following is a 910-amino-acid chain: Auxilin (910 aa).

3 tandem repeats follow at residues 33 to 36 (NLKD), 37 to 40 (NLKD), and 41 to 44 (TLKD). The 3 X 4 AA approximate tandem repeats stretch occupies residues 33 to 44 (NLKDNLKDTLKD). The Phosphatase tensin-type domain maps to 52-219 (SVTSYTKGDL…GYMCDLLADK (168 aa)). Residue Ser-109 is modified to Phosphoserine. The active-site Phosphocysteine intermediate is Cys-161. The C2 tensin-type domain occupies 225-363 (FKPLTIKSIT…FQVTLDVELQ (139 aa)). The SH3-binding signature appears at 406–414 (PIDIPPDNP). The interval 448–772 (QESEQSDDEL…RGKAAANLEG (325 aa)) is disordered. 4 positions are modified to phosphoserine: Ser-450, Ser-453, Ser-560, and Ser-567. Residues 547–569 (PSGPTSTQSTPRRSATSTSASPT) show a composition bias toward low complexity. The span at 596–626 (FLNTASASSDPFLQPTRSPSPTVHASSTPAV) shows a compositional bias: polar residues. The span at 651 to 666 (SAATSPTGSSHGTPTH) shows a compositional bias: low complexity. Over residues 715–725 (MGGGWQQGGGY) the composition is skewed to gly residues. Residues 732 to 758 (SKPQSSMPHSSPQNRPNYNVSFSSMPG) are compositionally biased toward polar residues. The 65-residue stretch at 846–910 (TKWKPVGMAD…FENQGQKPLY (65 aa)) folds into the J domain.

In terms of assembly, forms a complex composed of HSPA8, CLTC and DNAJC6. Interacts with HSPA8/HSC70 in an ATP-dependent manner; this interaction stimulates the HSPA8's ATPase activity. Interacts with CLTC; this interaction produces a local change in heavy-chain contacts, creating a detectable global distortion of the clathrin coat. Interacts with AP2A2. Interacts with DNM1(GTP-bound form); this interaction allows clathrin-coated vesicle (CCV) formation at the plasma membrane. The N-terminus is blocked. Post-translationally, phosphorylation at Ser-567 modulates its ability to bind CLTC and therefore the synaptic vesicle endocytosis (SVE). As to expression, brain.

It localises to the cytoplasmic vesicle. It is found in the clathrin-coated vesicle. Functionally, may act as a protein phosphatase and/or a lipid phosphatase. Co-chaperone that recruits HSPA8/HSC70 to clathrin-coated vesicles (CCVs) and promotes the ATP-dependent dissociation of clathrin from CCVs and participates in clathrin-mediated endocytosis of synaptic vesicles and their recycling and also in intracellular trafficking. Firstly, binds tightly to the clathrin cages, at a ratio of one DNAJC6 per clathrin triskelion. The HSPA8:ATP complex then binds to the clathrin-auxilin cage, initially at a ratio of one HSPA8 per triskelion leading to ATP hydrolysis stimulation and causing a conformational change in the HSPA8. This cycle is repeated three times to drive to a complex containing the clathrin-auxilin cage associated to three HSPA8:ADP complex. The ATP hydrolysis of the third HSPA8:ATP complex leads to a concerted dismantling of the cage into component triskelia. Then, dissociates from the released triskelia and be recycled to initiate another cycle of HSPA8's recruitment. Also acts during the early steps of clathrin-coated vesicle (CCV) formation through its interaction with the GTP bound form of DNM1. The sequence is that of Auxilin from Bos taurus (Bovine).